The chain runs to 608 residues: Actin-interacting protein 1 (608 aa).

11 WD repeats span residues 62-101, 106-149, 150-190, 193-232, 237-276, 323-362, 366-403, 444-483, 487-526, 531-570, and 575-607; these read EHSC…HLLK, PIAG…GEIS, GQSK…FKMT, DHSR…LVGE, AHKG…LVSE, GHNK…NDRI, GHGN…YTDY, PIKY…LEPK, DHLG…PAHN, FHSA…KHTI, and HPQS…HVEN.

It belongs to the WD repeat AIP1 family. Expressed in pupal wing cells.

The protein resides in the cytoplasm. The protein localises to the cytoskeleton. Induces disassembly of actin filaments in conjunction with ADF/cofilin family proteins. Together with GMF, promotes Arp2/3-nucleated actin filament array disassembly. Essential for organismal and cell viability. Required for the development of normal wing cell planar polarity. In egg chambers and together with GMF, plays an important role in directional migration of border cell clusters. This is Actin-interacting protein 1 (flr) from Drosophila melanogaster (Fruit fly).